The chain runs to 402 residues: Multidrug resistance protein MdtH (402 aa).

Topologically, residues 1-12 (MSRVSQARNLGK) are cytoplasmic. The chain crosses the membrane as a helical span at residues 13-33 (YFLLIDNMLVVLGFFVVFPLI). At 34–98 (SIRFVDQMGW…GFATMGIAHE (65 aa)) the chain is on the periplasmic side. The chain crosses the membrane as a helical span at residues 99 to 116 (PWLLWFSCFLSGLGGTLF). Residues 117 to 138 (DPPRSALVVKLIRPEQRDRFFS) are Cytoplasmic-facing. Residues 139–159 (LLMMQDSAGAVIGALLGSWLL) form a helical membrane-spanning segment. Residues 160-164 (QYDFR) are Periplasmic-facing. The chain crosses the membrane as a helical span at residues 165–185 (LVCATGAILFILCALFNAWLL). The Cytoplasmic portion of the chain corresponds to 186–213 (PAWKLSTVRTPVREGMRRVMSDKRFVTY). A helical transmembrane segment spans residues 214-234 (VLTLAGYYMLAVQVMLMLPIM). Over 235-243 (VNDIAGSPA) the chain is Periplasmic. The helical transmembrane segment at 244-264 (AVKWMYAIEACLSLTLLYPIA) threads the bilayer. Topologically, residues 265-276 (RWSEKRFRLEHR) are cytoplasmic. A helical transmembrane segment spans residues 277 to 297 (LMAGLLVMSLSMLPIGMVGNL). Topologically, residues 298-299 (QQ) are periplasmic. Residues 300–320 (LFTLICAFYIGSVIAEPARET) traverse the membrane as a helical segment. The Cytoplasmic portion of the chain corresponds to 321–339 (LSASLADARARGSYMGFSR). The chain crosses the membrane as a helical span at residues 340 to 360 (LGLAIGGAIGYIGGGWLFDMG). Topologically, residues 361–367 (KALAQPE) are periplasmic. Residues 368–388 (LPWMMLGIIGFITFLALGWQF) traverse the membrane as a helical segment. The Cytoplasmic portion of the chain corresponds to 389-402 (SHKRTPRRMLEPGA).

Belongs to the major facilitator superfamily. DHA1 family. MdtH (TC 2.A.1.2.21) subfamily.

It is found in the cell inner membrane. The chain is Multidrug resistance protein MdtH from Salmonella typhimurium (strain LT2 / SGSC1412 / ATCC 700720).